A 224-amino-acid chain; its full sequence is Orotidine 5'-phosphate decarboxylase (224 aa).

Residues Asp10, Lys32, 59 to 68, Thr115, Arg175, Gln184, Gly204, and Arg205 each bind substrate; that span reads DLKLHDIPNT. Lys61 acts as the Proton donor in catalysis.

This sequence belongs to the OMP decarboxylase family. Type 1 subfamily. As to quaternary structure, homodimer.

The enzyme catalyses orotidine 5'-phosphate + H(+) = UMP + CO2. Its pathway is pyrimidine metabolism; UMP biosynthesis via de novo pathway; UMP from orotate: step 2/2. Functionally, catalyzes the decarboxylation of orotidine 5'-monophosphate (OMP) to uridine 5'-monophosphate (UMP). This chain is Orotidine 5'-phosphate decarboxylase, found in Sphingopyxis alaskensis (strain DSM 13593 / LMG 18877 / RB2256) (Sphingomonas alaskensis).